A 358-amino-acid polypeptide reads, in one-letter code: Peptide chain release factor 1 (358 aa).

Residue Q237 is modified to N5-methylglutamine.

It belongs to the prokaryotic/mitochondrial release factor family. Methylated by PrmC. Methylation increases the termination efficiency of RF1.

The protein resides in the cytoplasm. Peptide chain release factor 1 directs the termination of translation in response to the peptide chain termination codons UAG and UAA. The protein is Peptide chain release factor 1 of Mycoplasma mobile (strain ATCC 43663 / 163K / NCTC 11711) (Mesomycoplasma mobile).